Reading from the N-terminus, the 113-residue chain is UPF0145 protein SynWH7803_1684 (113 aa).

The protein belongs to the UPF0145 family.

In Synechococcus sp. (strain WH7803), this protein is UPF0145 protein SynWH7803_1684.